Consider the following 510-residue polypeptide: Glycerol kinase (510 aa).

Thr12 provides a ligand contact to ADP. Residues Thr12, Thr13, and Ser14 each contribute to the ATP site. Residue Thr12 coordinates sn-glycerol 3-phosphate. Arg16 contacts ADP. Sn-glycerol 3-phosphate is bound by residues Arg82, Glu83, and Tyr134. Arg82, Glu83, and Tyr134 together coordinate glycerol. The residue at position 230 (His230) is a Phosphohistidine; by HPr. Asp244 provides a ligand contact to sn-glycerol 3-phosphate. 2 residues coordinate glycerol: Asp244 and Gln245. ADP-binding residues include Thr266 and Gly309. Thr266, Gly309, Gln313, and Gly410 together coordinate ATP. Gly410 and Asn414 together coordinate ADP.

It belongs to the FGGY kinase family. Homotetramer and homodimer (in equilibrium). Post-translationally, the phosphoenolpyruvate-dependent sugar phosphotransferase system (PTS), including enzyme I, and histidine-containing protein (HPr) are required for the phosphorylation, which leads to the activation of the enzyme.

The catalysed reaction is glycerol + ATP = sn-glycerol 3-phosphate + ADP + H(+). Its pathway is polyol metabolism; glycerol degradation via glycerol kinase pathway; sn-glycerol 3-phosphate from glycerol: step 1/1. Activated by phosphorylation and inhibited by fructose 1,6-bisphosphate (FBP). Key enzyme in the regulation of glycerol uptake and metabolism. Catalyzes the phosphorylation of glycerol to yield sn-glycerol 3-phosphate. The sequence is that of Glycerol kinase from Bacillus cereus (strain ATCC 10987 / NRS 248).